A 322-amino-acid chain; its full sequence is MARDKIALIGSGQIGGTLAHLIGLKELGDVVMFDIAEGIPQGKSLDIAQSSPVDGFDAKLTGANSYEALEGARVCIVTAGIPRKPGMSRDDLLSINLKVMEQVGAGIKKYAPDAFVICITNPLDAMVWALQKASGMPAKKVVGMAGVLDSSRFRYFLADEFDVSVEDVTAFVLGGHGDSMVPLVKYSTVAGIPLPDLVKMGWTSQARIDEIVDRTRNGGAEIVNLLKTGSAFYAPAASAIAMAESYLRDKKRVLPCAAYLNGEFGVKDMYVGVPVVIGARGVERIVEIELAGKDREAFDKSVGAVQGLIDACKKIAPDLLGK.

Residues 10 to 15 (GSGQIG) and Asp34 contribute to the NAD(+) site. Arg83 and Arg89 together coordinate substrate. NAD(+) contacts are provided by residues Asn96 and 119–121 (ITN). 2 residues coordinate substrate: Asn121 and Arg152. His176 functions as the Proton acceptor in the catalytic mechanism.

This sequence belongs to the LDH/MDH superfamily. MDH type 3 family.

It carries out the reaction (S)-malate + NAD(+) = oxaloacetate + NADH + H(+). Catalyzes the reversible oxidation of malate to oxaloacetate. The chain is Malate dehydrogenase from Nitrobacter hamburgensis (strain DSM 10229 / NCIMB 13809 / X14).